Here is a 187-residue protein sequence, read N- to C-terminus: UPF0301 protein WIGBR1650 (187 aa).

It belongs to the UPF0301 (AlgH) family.

The polypeptide is UPF0301 protein WIGBR1650 (Wigglesworthia glossinidia brevipalpis).